The primary structure comprises 586 residues: Asparagine synthetase [glutamine-hydrolyzing] 1 (586 aa).

Cys2 acts as the For GATase activity in catalysis. Residues 2 to 185 enclose the Glutamine amidotransferase type-2 domain; the sequence is CGILAVLGCS…PGHLYSSRER (184 aa). Residues 50–54, 75–77, and Asp98 each bind L-glutamine; these read RLAIV and NGE. The Asparagine synthetase domain occupies 193 to 516; that stretch reads PTWFSESIPS…PQNSARLTVP (324 aa). ATP-binding positions include Leu231, Val267, and 341-342; that span reads SG.

It carries out the reaction L-aspartate + L-glutamine + ATP + H2O = L-asparagine + L-glutamate + AMP + diphosphate + H(+). It participates in amino-acid biosynthesis; L-asparagine biosynthesis; L-asparagine from L-aspartate (L-Gln route): step 1/1. This Lotus japonicus (Lotus corniculatus var. japonicus) protein is Asparagine synthetase [glutamine-hydrolyzing] 1 (AS1).